Reading from the N-terminus, the 877-residue chain is DNA (cytosine-5)-methyltransferase 3A (877 aa).

Disordered regions lie at residues Met1–His154, Glu194–Glu250, and Ala412–Lys431. 2 stretches are compositionally biased toward basic and acidic residues: residues Lys107–Arg133 and Glu195–Glu206. Positions Pro210–Thr225 are enriched in polar residues. The 59-residue stretch at Thr226 to Ser284 folds into the PWWP domain. Positions Ala234 to Asp244 are enriched in basic and acidic residues. The ADD domain maps to Glu447–Asp579. The segment at Ile458 to Glu488 adopts a GATA-type; atypical zinc-finger fold. A PHD-type; atypical zinc finger spans residues Gln499–Gly555. The 279-residue stretch at Ile599–Val877 folds into the SAM-dependent MTase C5-type domain. S-adenosyl-L-methionine contacts are provided by residues Asp606–Thr610, Glu629, and Asp651–Arg653. Cys675 is a catalytic residue. Arg856–Trp858 serves as a coordination point for S-adenosyl-L-methionine.

The protein belongs to the class I-like SAM-binding methyltransferase superfamily. C5-methyltransferase family.

The protein resides in the nucleus. It is found in the chromosome. The protein localises to the cytoplasm. It carries out the reaction a 2'-deoxycytidine in DNA + S-adenosyl-L-methionine = a 5-methyl-2'-deoxycytidine in DNA + S-adenosyl-L-homocysteine + H(+). It catalyses the reaction L-cysteinyl-[protein] + S-adenosyl-L-methionine = S-methyl-L-cysteinyl-[protein] + S-adenosyl-L-homocysteine + H(+). Its function is as follows. Required for genome-wide de novo methylation and is essential for development. DNA methylation is coordinated with methylation of histones. It modifies DNA in a non-processive manner and also methylates non-CpG sites. Acts as a transcriptional corepressor for ZNF238. Can actively repress transcription through the recruitment of HDAC activity. Also has weak auto-methylation activity on some Cys residue in absence of DNA. The polypeptide is DNA (cytosine-5)-methyltransferase 3A (DNMT3A) (Gallus gallus (Chicken)).